We begin with the raw amino-acid sequence, 716 residues long: 1,4-alpha-glucan branching enzyme GlgB (716 aa).

Asp-398 functions as the Nucleophile in the catalytic mechanism. Glu-451 (proton donor) is an active-site residue.

Belongs to the glycosyl hydrolase 13 family. GlgB subfamily. Monomer.

The enzyme catalyses Transfers a segment of a (1-&gt;4)-alpha-D-glucan chain to a primary hydroxy group in a similar glucan chain.. Its pathway is glycan biosynthesis; glycogen biosynthesis. Its function is as follows. Catalyzes the formation of the alpha-1,6-glucosidic linkages in glycogen by scission of a 1,4-alpha-linked oligosaccharide from growing alpha-1,4-glucan chains and the subsequent attachment of the oligosaccharide to the alpha-1,6 position. In Nitrobacter winogradskyi (strain ATCC 25391 / DSM 10237 / CIP 104748 / NCIMB 11846 / Nb-255), this protein is 1,4-alpha-glucan branching enzyme GlgB.